We begin with the raw amino-acid sequence, 1464 residues long: Bridge-like lipid transfer protein family member 3B (1464 aa).

The region spanning 3–94 (GIIKKQILKH…DKVIMEMSTC (92 aa)) is the Chorein N-terminal domain. Disordered stretches follow at residues 267–297 (STEQ…TQTS) and 409–436 (DHNV…YPLK). Residues 278–297 (PTQSSTVVASAQQVKTTQTS) are compositionally biased toward polar residues. A phosphoserine mark is found at serine 414, serine 418, serine 774, serine 935, and serine 1009. 3 disordered regions span residues 1066-1089 (SKEE…PKER), 1164-1183 (LQNY…EGAQ), and 1392-1413 (QRSV…QSAN). Composition is skewed to polar residues over residues 1164 to 1182 (LQNY…SEGA) and 1394 to 1413 (SVTQ…QSAN). Positions 1418–1456 (SFDFTREQLMEENESLKQELAKAKMALAEAHLEKDALLH) form a coiled coil.

Monomer. Homodimer (via N-terminus). Associates with the Golgi-associated retrograde protein (GARP) complex. Interacts with GARP complex component VPS52. Interacts (via C-terminal coiled-coil domain) with STX6.

The protein resides in the cytoplasm. Its subcellular location is the cytosol. It is found in the early endosome. Functionally, tube-forming lipid transport protein which mediates the transfer of lipids between membranes at organelle contact sites. Required for retrograde traffic of vesicle clusters in the early endocytic pathway to the Golgi complex. This is Bridge-like lipid transfer protein family member 3B from Homo sapiens (Human).